A 326-amino-acid polypeptide reads, in one-letter code: N-acetyl-gamma-glutamyl-phosphate reductase (326 aa).

Residue Cys155 is part of the active site.

This sequence belongs to the NAGSA dehydrogenase family. Type 1 subfamily.

The protein resides in the cytoplasm. The catalysed reaction is N-acetyl-L-glutamate 5-semialdehyde + phosphate + NADP(+) = N-acetyl-L-glutamyl 5-phosphate + NADPH + H(+). Its pathway is amino-acid biosynthesis; L-arginine biosynthesis; N(2)-acetyl-L-ornithine from L-glutamate: step 3/4. Functionally, catalyzes the NADPH-dependent reduction of N-acetyl-5-glutamyl phosphate to yield N-acetyl-L-glutamate 5-semialdehyde. This Shewanella baltica (strain OS223) protein is N-acetyl-gamma-glutamyl-phosphate reductase.